Consider the following 358-residue polypeptide: tRNA N6-adenosine threonylcarbamoyltransferase (358 aa).

His-122 and His-126 together coordinate Fe cation. Residues 145-149, Asp-178, Gly-191, and Asn-287 contribute to the substrate site; that span reads LVSGG. Residue Asp-315 coordinates Fe cation.

This sequence belongs to the KAE1 / TsaD family. It depends on Fe(2+) as a cofactor.

It localises to the cytoplasm. The enzyme catalyses L-threonylcarbamoyladenylate + adenosine(37) in tRNA = N(6)-L-threonylcarbamoyladenosine(37) in tRNA + AMP + H(+). Its function is as follows. Required for the formation of a threonylcarbamoyl group on adenosine at position 37 (t(6)A37) in tRNAs that read codons beginning with adenine. Is involved in the transfer of the threonylcarbamoyl moiety of threonylcarbamoyl-AMP (TC-AMP) to the N6 group of A37, together with TsaE and TsaB. TsaD likely plays a direct catalytic role in this reaction. The polypeptide is tRNA N6-adenosine threonylcarbamoyltransferase (Hydrogenovibrio crunogenus (strain DSM 25203 / XCL-2) (Thiomicrospira crunogena)).